The chain runs to 202 residues: Putative 3-methyladenine DNA glycosylase (202 aa).

The protein belongs to the DNA glycosylase MPG family.

The polypeptide is Putative 3-methyladenine DNA glycosylase (Clostridium botulinum (strain Alaska E43 / Type E3)).